The following is a 355-amino-acid chain: Glucose-1-phosphate thymidylyltransferase (355 aa).

Mg(2+) contacts are provided by Asp107 and Asp220.

It belongs to the glucose-1-phosphate thymidylyltransferase family. It depends on Mg(2+) as a cofactor.

It catalyses the reaction dTTP + alpha-D-glucose 1-phosphate + H(+) = dTDP-alpha-D-glucose + diphosphate. Its pathway is antibiotic biosynthesis; streptomycin biosynthesis. Its function is as follows. Involved in the biosynthesis of the streptose moiety of streptomycin. Catalyzes the formation of dTDP-glucose, from dTTP and glucose 1-phosphate, as well as its pyrophosphorolysis. This Streptomyces griseus protein is Glucose-1-phosphate thymidylyltransferase (strD).